Here is a 76-residue protein sequence, read N- to C-terminus: Omega-scoloptoxin(13)-Ssm2b (76 aa).

Positions 1–22 are cleaved as a signal peptide; sequence MAYIYALIFAIVVCMNTDVIQA.

This sequence belongs to the scoloptoxin-13 family. Post-translationally, contains 3 disulfide bonds. In terms of tissue distribution, expressed by the venom gland.

Its subcellular location is the secreted. Inhibits voltage-gated calcium channel (Cav) currents. In Scolopendra mutilans (Chinese red-headed centipede), this protein is Omega-scoloptoxin(13)-Ssm2b.